The primary structure comprises 315 residues: Probable cell division protein WhiA (315 aa).

The segment at residues 280–313 (SLRELGKMLNPPVGKSGVNHRLRRIEKIADELKQ) is a DNA-binding region (H-T-H motif).

It belongs to the WhiA family.

Its function is as follows. Involved in cell division and chromosome segregation. The protein is Probable cell division protein WhiA of Clostridium botulinum (strain ATCC 19397 / Type A).